Here is a 413-residue protein sequence, read N- to C-terminus: NPL4-like protein 1 (413 aa).

Phosphoserine is present on serine 104. One can recognise an MPN domain in the interval 131 to 272; the sequence is SVSFDRDCAN…ADVHFEPFQM (142 aa).

Belongs to the NPL4 family.

The protein operates within protein degradation; proteasomal ubiquitin-dependent pathway. May be part of a complex that binds ubiquitinated proteins and that is necessary for the export of misfolded proteins from the ER to the cytoplasm, where they are degraded by the proteasome. The sequence is that of NPL4-like protein 1 from Arabidopsis thaliana (Mouse-ear cress).